Reading from the N-terminus, the 84-residue chain is U1-hexatoxin-Iw1a (84 aa).

Positions 1-18 (MLKFVVVICLVIMAITFA) are cleaved as a signal peptide. Disulfide bonds link Cys-21–Cys-32, Cys-26–Cys-40, Cys-31–Cys-66, Cys-50–Cys-74, and Cys-68–Cys-81.

It belongs to the MIT-like AcTx family. As to expression, expressed by the venom gland.

The protein localises to the secreted. The polypeptide is U1-hexatoxin-Iw1a (Illawarra wisharti (Illawarra funnel-web spider)).